The following is a 196-amino-acid chain: NADH-quinone oxidoreductase subunit B (196 aa).

Cysteine 63, cysteine 64, cysteine 129, and cysteine 159 together coordinate [4Fe-4S] cluster.

This sequence belongs to the complex I 20 kDa subunit family. In terms of assembly, NDH-1 is composed of 14 different subunits. Subunits NuoB, C, D, E, F, and G constitute the peripheral sector of the complex. It depends on [4Fe-4S] cluster as a cofactor.

The protein resides in the cell inner membrane. The enzyme catalyses a quinone + NADH + 5 H(+)(in) = a quinol + NAD(+) + 4 H(+)(out). In terms of biological role, NDH-1 shuttles electrons from NADH, via FMN and iron-sulfur (Fe-S) centers, to quinones in the respiratory chain. The immediate electron acceptor for the enzyme in this species is believed to be a menaquinone. Couples the redox reaction to proton translocation (for every two electrons transferred, four hydrogen ions are translocated across the cytoplasmic membrane), and thus conserves the redox energy in a proton gradient. The sequence is that of NADH-quinone oxidoreductase subunit B from Bacteroides fragilis (strain ATCC 25285 / DSM 2151 / CCUG 4856 / JCM 11019 / LMG 10263 / NCTC 9343 / Onslow / VPI 2553 / EN-2).